The sequence spans 307 residues: Opsin-like protein carO (307 aa).

A glycan (N-linked (GlcNAc...) asparagine) is linked at asparagine 28. 7 helical membrane passes run 36–56, 64–84, 118–138, 140–160, 166–186, 202–222, and 235–255; these read WYWAVCAVMTVSTFAFLGLGM, IFHYITAGITMIASIAYFTMA, WFLTTPLLLTDLLLTAGMPWP, VLWVILVDWVMIVTGLVGALV, WGYFAFGCAALAYIVYVLAWE, FVMCGSLTAVVWILYPIAWGV, and AVFYGILDLIAKPVFGALLLW. Residues 280 to 307 form a disordered region; it reads GPNNKVASGHGARNDTATASGSNVNPNA. Asparagine 293 carries N-linked (GlcNAc...) asparagine glycosylation. Positions 294–307 are enriched in polar residues; the sequence is DTATASGSNVNPNA.

The protein belongs to the archaeal/bacterial/fungal opsin family.

The protein localises to the membrane. Functionally, opsin-like protein; part of the car gene cluster that mediates the biosynthesis of neurosporaxanthin, a carboxylic apocarotenoid acting as an essential protective pigment and leading to orange pigmentation. The exact role of carO in carotenoid biosynthesis is not known yet, but it could be involved in the regulation of the pathway by light or other stimuli. The chain is Opsin-like protein carO from Fusarium fujikuroi (Bakanae and foot rot disease fungus).